Consider the following 100-residue polypeptide: uncharacterized protein (100 aa).

Helical transmembrane passes span Leu-50–Phe-70 and Asp-75–Val-95.

It is found in the membrane. This is an uncharacterized protein from Saccharomyces cerevisiae (strain ATCC 204508 / S288c) (Baker's yeast).